Here is a 147-residue protein sequence, read N- to C-terminus: Cystatin-9-like (147 aa).

An N-terminal signal peptide occupies residues 1–28 (MLGLPWKGGLSWALLLLLLGSQILLIYA). C98 and C108 are joined by a disulfide. N117 and N139 each carry an N-linked (GlcNAc...) asparagine glycan. A disulfide bridge connects residues C122 and C142.

It belongs to the cystatin family. In terms of tissue distribution, specifically expressed in testis.

The protein resides in the secreted. The protein is Cystatin-9-like (CST9L) of Homo sapiens (Human).